A 383-amino-acid chain; its full sequence is Mating-type protein MAT-1 (383 aa).

Residues 60–117 (KARKALNAFVGFRCYYVTIPMFKSWPMKKLSNLIGLLWEADPNKSLWSLMAKAWSTIR) constitute a DNA-binding region (alpha box).

Belongs to the MATALPHA1 family.

It localises to the nucleus. Mating type proteins are sequence specific DNA-binding proteins that act as master switches in fungal differentiation by controlling gene expression in a cell type-specific fashion. Transcriptional activator that induces the transcription of alpha-specific genes. This is Mating-type protein MAT-1 (MAT1) from Cochliobolus heterostrophus (Southern corn leaf blight fungus).